The sequence spans 71 residues: Keratin-associated protein 6-1 (71 aa).

This sequence belongs to the KRTAP type 6 family. In terms of assembly, interacts with hair keratins.

Its function is as follows. In the hair cortex, hair keratin intermediate filaments are embedded in an interfilamentous matrix, consisting of hair keratin-associated proteins (KRTAP), which are essential for the formation of a rigid and resistant hair shaft through their extensive disulfide bond cross-linking with abundant cysteine residues of hair keratins. The matrix proteins include the high-sulfur and high-glycine-tyrosine keratins. In Homo sapiens (Human), this protein is Keratin-associated protein 6-1 (KRTAP6-1).